We begin with the raw amino-acid sequence, 192 residues long: MDGSGEQLGSGGPTSSEQIMKTGAFLLQGFIQDRAGRMAGETPELTLEQPPQDASTKKLSECLRRIGDELDSNMELQRMIADVDTDSPREVFFRVAADMFADGNFNWGRVVALFYFASKLVLKALCTKVPELIRTIMGWTLDFLRERLLVWIQDQGGWEGLLSYFGTPTWQTVTIFVAGVLTASLTIWKKMG.

Met1 bears the N-acetylmethionine mark. A BH3 motif is present at residues 59–73 (LSECLRRIGDELDSN). The BH1 motif lies at 98 to 118 (DMFADGNFNWGRVVALFYFAS). Residue Lys128 forms a Glycyl lysine isopeptide (Lys-Gly) (interchain with G-Cter in ubiquitin) linkage. Positions 150 to 165 (VWIQDQGGWEGLLSYF) match the BH2 motif. Residues 172 to 192 (TVTIFVAGVLTASLTIWKKMG) traverse the membrane as a helical segment. Lys190 is covalently cross-linked (Glycyl lysine isopeptide (Lys-Gly) (interchain with G-Cter in ubiquitin)).

The protein belongs to the Bcl-2 family. In terms of assembly, homodimer. Forms higher oligomers under stress conditions. Forms heterooligomers with BAK. Interacts with BCL2L11. Interaction with BCL2L11 promotes BAX oligomerization and association with mitochondrial membranes, with subsequent release of cytochrome c. Forms heterodimers with BCL2. Forms heterodimers with BCL2L1 isoform Bcl-X(L), BCL2L2, MCL1 and A1. Interacts with SH3GLB1. Interacts with SFN and YWHAZ; the interaction occurs in the cytoplasm. Under stress conditions, JNK-mediated phosphorylation of SFN and YWHAZ, releases BAX to mitochondria. Interacts with RNF144B, which regulates the ubiquitin-dependent stability of BAX. Interacts with CLU under stress conditions that cause a conformation change leading to BAX oligomerization and association with mitochondria. Does not interact with CLU in unstressed cells. Interacts with FAIM2/LFG2. Interacts with BOP. Interacts (via a C-terminal 33 residues) with NOL3 (via CARD domain); inhibits BAX activation and translocationand consequently cytochrome c release from mitochondria. Interacts with GIMAP3/IAN4 and GIMAP5/IAN5; this interaction is increased, when cells initiate apoptosis upon IL2 withdrawal. Interacts with IRF3; the interaction is direct and, upon virus infection, mediates the formation of the apoptosis complex TOMM70:HSP90AA1:IRF3:BAX. Interacts with MOAP1, facilitating BAX-dependent mitochondrial outer membrane permeabilization and apoptosis. Interacts with BCL2L10/BCL-B. Interacts with non-acetylated XRCC6/Ku70; this interaction leads to BAX sequestration in the cytosol, away from the mitochondria, preventing BAX-mediated apoptosis. (Microbial infection) Interacts with gamma-herpesvirus 68 protein vBCL2. In terms of processing, ubiquitinated in the absence of XRCC6/Ku70. Ubiquitinated on Lys-128 and Lys-190. 'Lys-63'-linked polyubiquitin chains on Lys-128 are removed by USP12. Expressed in a wide variety of tissues.

Its subcellular location is the mitochondrion outer membrane. The protein resides in the cytoplasm. It is found in the nucleus. Functionally, accelerates programmed cell death by binding to, and antagonizing the apoptosis repressor BCL2 or its adenovirus homolog E1B 19k protein. Under stress conditions, undergoes a conformation change that causes translocation to the mitochondrion membrane, leading to the release of cytochrome c that then triggers apoptosis. Promotes activation of CASP3, and thereby apoptosis. BAX deficiency leads to lymphoid hyperplasia and male sterility, because of the cessation of sperm production. The protein is Apoptosis regulator BAX (Bax) of Mus musculus (Mouse).